Here is a 258-residue protein sequence, read N- to C-terminus: UPF0246 protein PM0066 (258 aa).

The protein belongs to the UPF0246 family.

This chain is UPF0246 protein PM0066, found in Pasteurella multocida (strain Pm70).